A 78-amino-acid chain; its full sequence is Acyl carrier protein (78 aa).

Residues 2–77 (SSIEERVKKI…LAIDYINANL (76 aa)) form the Carrier domain. Position 37 is an O-(pantetheine 4'-phosphoryl)serine (serine 37).

The protein belongs to the acyl carrier protein (ACP) family. In terms of processing, 4'-phosphopantetheine is transferred from CoA to a specific serine of apo-ACP by AcpS. This modification is essential for activity because fatty acids are bound in thioester linkage to the sulfhydryl of the prosthetic group.

Its subcellular location is the cytoplasm. It participates in lipid metabolism; fatty acid biosynthesis. Carrier of the growing fatty acid chain in fatty acid biosynthesis. The chain is Acyl carrier protein from Cellvibrio japonicus (strain Ueda107) (Pseudomonas fluorescens subsp. cellulosa).